Here is a 468-residue protein sequence, read N- to C-terminus: Probable Xaa-Pro aminopeptidase pepP (468 aa).

4 residues coordinate Mn(2+): Asp264, Asp275, Glu398, and Glu438.

This sequence belongs to the peptidase M24B family. Mn(2+) serves as cofactor.

The enzyme catalyses Release of any N-terminal amino acid, including proline, that is linked to proline, even from a dipeptide or tripeptide.. Its function is as follows. Catalyzes the removal of a penultimate prolyl residue from the N-termini of peptides. The chain is Probable Xaa-Pro aminopeptidase pepP (pepP) from Talaromyces stipitatus (strain ATCC 10500 / CBS 375.48 / QM 6759 / NRRL 1006) (Penicillium stipitatum).